The sequence spans 190 residues: UPF0301 protein Reut_A0705 (190 aa).

The protein belongs to the UPF0301 (AlgH) family.

In Cupriavidus pinatubonensis (strain JMP 134 / LMG 1197) (Cupriavidus necator (strain JMP 134)), this protein is UPF0301 protein Reut_A0705.